Consider the following 157-residue polypeptide: 6,7-dimethyl-8-ribityllumazine synthase 1 (157 aa).

5-amino-6-(D-ribitylamino)uracil is bound by residues Phe22, 53 to 55 (ALE), and 82 to 84 (TVI). 87 to 88 (ET) lines the (2S)-2-hydroxy-3-oxobutyl phosphate pocket. His90 functions as the Proton donor in the catalytic mechanism. Asn115 provides a ligand contact to 5-amino-6-(D-ribitylamino)uracil. Residue Arg129 participates in (2S)-2-hydroxy-3-oxobutyl phosphate binding.

This sequence belongs to the DMRL synthase family.

The enzyme catalyses (2S)-2-hydroxy-3-oxobutyl phosphate + 5-amino-6-(D-ribitylamino)uracil = 6,7-dimethyl-8-(1-D-ribityl)lumazine + phosphate + 2 H2O + H(+). It participates in cofactor biosynthesis; riboflavin biosynthesis; riboflavin from 2-hydroxy-3-oxobutyl phosphate and 5-amino-6-(D-ribitylamino)uracil: step 1/2. Catalyzes the formation of 6,7-dimethyl-8-ribityllumazine by condensation of 5-amino-6-(D-ribitylamino)uracil with 3,4-dihydroxy-2-butanone 4-phosphate. This is the penultimate step in the biosynthesis of riboflavin. This is 6,7-dimethyl-8-ribityllumazine synthase 1 from Brucella suis biovar 1 (strain 1330).